Here is a 29-residue protein sequence, read N- to C-terminus: Dermaseptin-1 (29 aa).

Val29 is subject to Valine amide.

Expressed by the skin glands.

Its subcellular location is the secreted. Antimicrobial peptide, active against the Gram-positive bacterium S.aureus, the Gram-negative bacteria E.coli and P.aeruginosa, and the yeasts C.albicans and P.brasiliensis. Has hemolytic activity (40% hemolysis at 128 ug/ml). The polypeptide is Dermaseptin-1 (Phyllomedusa tarsius (Brownbelly leaf frog)).